The primary structure comprises 178 residues: Probable major fimbrial subunit LpfA (178 aa).

Positions 1-24 (MEFFMKKVVFALTALALTSGTVFA) are cleaved as a signal peptide.

It belongs to the fimbrial protein family.

Its subcellular location is the fimbrium. In terms of biological role, part of the lpfABCC'DE fimbrial operon. LP fimbriae may participate in the interaction with eukaryotic cells by assisting in microcolony formation. In Escherichia coli O157:H7, this protein is Probable major fimbrial subunit LpfA (lpfA).